The chain runs to 72 residues: Translational regulator CsrA (72 aa).

The protein belongs to the CsrA/RsmA family. As to quaternary structure, homodimer; the beta-strands of each monomer intercalate to form a hydrophobic core, while the alpha-helices form wings that extend away from the core.

The protein resides in the cytoplasm. Functionally, a translational regulator that binds mRNA to regulate translation initiation and/or mRNA stability. Usually binds in the 5'-UTR at or near the Shine-Dalgarno sequence preventing ribosome-binding, thus repressing translation. Its main target seems to be the major flagellin gene, while its function is anatagonized by FliW. This is Translational regulator CsrA from Lachnoclostridium phytofermentans (strain ATCC 700394 / DSM 18823 / ISDg) (Clostridium phytofermentans).